Here is a 37-residue protein sequence, read N- to C-terminus: Large ribosomal subunit protein bL36 (37 aa).

Belongs to the bacterial ribosomal protein bL36 family.

The chain is Large ribosomal subunit protein bL36 from Polaromonas naphthalenivorans (strain CJ2).